The primary structure comprises 644 residues: Probable potassium transport system protein Kup (644 aa).

Transmembrane regions (helical) follow at residues 10 to 30, 56 to 76, 106 to 126, 143 to 163, 175 to 195, 212 to 232, 252 to 272, 282 to 302, 343 to 363, 371 to 391, 403 to 423, and 425 to 445; these read GGATLPLMAMAALGVVFGDIG, ILSLIFWTLVLVVSVKYAWVI, WWILSIGLLGAALFYGDGVIT, PAWKPLVIPLALGVIIGLFMV, FGPSMLVWFLLLFGSGLTWIV, FFGIHGIGGLVILGAVVLAVT, AWYFLVLPALALNYLGQGALL, PFFMLFPAWATIPMVVISGIA, IYLPLLNWLLMVAVIVVILWF, FAYGTAVTGTMLMTTILVFFV, AGLFCGFFVLLDGVFFGANLL, and FVEGGWFPLAIGLAVFTTMST.

The protein belongs to the HAK/KUP transporter (TC 2.A.72) family.

The protein resides in the cell inner membrane. The catalysed reaction is K(+)(in) + H(+)(in) = K(+)(out) + H(+)(out). Its function is as follows. Transport of potassium into the cell. Likely operates as a K(+):H(+) symporter. The sequence is that of Probable potassium transport system protein Kup from Acidithiobacillus ferrooxidans (strain ATCC 23270 / DSM 14882 / CIP 104768 / NCIMB 8455) (Ferrobacillus ferrooxidans (strain ATCC 23270)).